We begin with the raw amino-acid sequence, 460 residues long: MALNVVILAAGKGTRMRSDLPKVLHPIAHKSMVQHVIDTAHKVGSDAIQLVYGYGADKLKASLGEQQLNWVLQAEQLGTGHAVAQASPHIADNDTVLILYGDVPLIQQSTLEALLAARPENGVAILTVNLANPMGYGRIVRTPCEGQEQGKVIGIIEQKDATAEQLLINEINTGIMAVPGKQLKAWLSRLSNNNAQGEYYLTDIIAMAHADGVAIDTAQPQSAIEVEGANNRVQLAQLERAYQAREAEKLMLAGANLRDPSRIDIRGDVTVGMDVMIDINVIFEGKVTLGNNVTIGAGAILIDCEIADNAEIKPYSIIEGAKLGVAASAGPFARLRPGAELKQDAHIGNFVEVKKAVIGVGSKAGHLAYLGDAIIGDGVNIGAGTITCNYDGANKHLTVIEDNVFVGSDTQLVAPVTIGKGATLGAGSTITRDVGENELVITRVKQKHLTGWQRPVKIKK.

The interval methionine 1–arginine 232 is pyrophosphorylase. UDP-N-acetyl-alpha-D-glucosamine contacts are provided by residues leucine 8–glycine 11, lysine 22, glutamine 73, glycine 78–threonine 79, tyrosine 100–aspartate 102, glycine 137, glutamate 157, asparagine 172, and asparagine 230. Mg(2+) is bound at residue aspartate 102. Position 230 (asparagine 230) interacts with Mg(2+). Residues valine 233–alanine 253 are linker. Residues glycine 254 to lysine 460 are N-acetyltransferase. UDP-N-acetyl-alpha-D-glucosamine is bound by residues arginine 336 and lysine 354. Histidine 366 (proton acceptor) is an active-site residue. Residues tyrosine 369 and asparagine 380 each contribute to the UDP-N-acetyl-alpha-D-glucosamine site. Residues alanine 383, asparagine 389 to tyrosine 390, serine 408, alanine 426, and arginine 443 each bind acetyl-CoA.

This sequence in the N-terminal section; belongs to the N-acetylglucosamine-1-phosphate uridyltransferase family. It in the C-terminal section; belongs to the transferase hexapeptide repeat family. As to quaternary structure, homotrimer. Mg(2+) is required as a cofactor.

It localises to the cytoplasm. The enzyme catalyses alpha-D-glucosamine 1-phosphate + acetyl-CoA = N-acetyl-alpha-D-glucosamine 1-phosphate + CoA + H(+). The catalysed reaction is N-acetyl-alpha-D-glucosamine 1-phosphate + UTP + H(+) = UDP-N-acetyl-alpha-D-glucosamine + diphosphate. The protein operates within nucleotide-sugar biosynthesis; UDP-N-acetyl-alpha-D-glucosamine biosynthesis; N-acetyl-alpha-D-glucosamine 1-phosphate from alpha-D-glucosamine 6-phosphate (route II): step 2/2. It participates in nucleotide-sugar biosynthesis; UDP-N-acetyl-alpha-D-glucosamine biosynthesis; UDP-N-acetyl-alpha-D-glucosamine from N-acetyl-alpha-D-glucosamine 1-phosphate: step 1/1. It functions in the pathway bacterial outer membrane biogenesis; LPS lipid A biosynthesis. Functionally, catalyzes the last two sequential reactions in the de novo biosynthetic pathway for UDP-N-acetylglucosamine (UDP-GlcNAc). The C-terminal domain catalyzes the transfer of acetyl group from acetyl coenzyme A to glucosamine-1-phosphate (GlcN-1-P) to produce N-acetylglucosamine-1-phosphate (GlcNAc-1-P), which is converted into UDP-GlcNAc by the transfer of uridine 5-monophosphate (from uridine 5-triphosphate), a reaction catalyzed by the N-terminal domain. This chain is Bifunctional protein GlmU, found in Shewanella baltica (strain OS195).